The chain runs to 78 residues: Large ribosomal subunit protein bL28 (78 aa).

It belongs to the bacterial ribosomal protein bL28 family.

This is Large ribosomal subunit protein bL28 from Bordetella avium (strain 197N).